We begin with the raw amino-acid sequence, 249 residues long: Chromosome segregation and cytokinesis defective protein 1 (249 aa).

The stretch at 12–48 forms a coiled coil; it reads VVAMADTLETRVKDLLEEYKKKLREVALQTAKAESDR. 3 disordered regions span residues 70 to 89, 94 to 183, and 208 to 249; these read PDDFYIESGEEEEEGEAAVA, LPSE…PEKP, and TTAT…GTSV. The span at 73 to 85 shows a compositional bias: acidic residues; sequence FYIESGEEEEEGE. The span at 109-126 shows a compositional bias: polar residues; the sequence is QKTSIPIGQNSGRNTVQV. Residues 224-236 are compositionally biased toward low complexity; the sequence is SGAASKKAAAAAG.

It belongs to the borealin family. Highly divergent. In terms of assembly, component of the CPC complex which consists of icp-1; csc-1; bir-1 and air-2. Within the complex interacts with Aurora B/air-2, bir-1 and icp-1.

It localises to the nucleus. The protein resides in the chromosome. It is found in the centromere. The protein localises to the cytoplasm. Its subcellular location is the cytoskeleton. It localises to the spindle. Its function is as follows. Component of the chromosomal passenger complex (CPC), a complex that acts as a key regulator of chromosome segregation and cytokinesis during mitosis. The CPC complex has essential functions at the centromere in ensuring correct chromosome alignment and segregation. In the complex, it may be required to direct the Aurora B/air-2 to centromeric DNA. The sequence is that of Chromosome segregation and cytokinesis defective protein 1 (csc-1) from Caenorhabditis elegans.